Consider the following 56-residue polypeptide: Large ribosomal subunit protein bL32 (56 aa).

The disordered stretch occupies residues 1-26 (MAVQQNKKSRSKRGMRRSHDALSTAQ). The segment covering 7–16 (KKSRSKRGMR) has biased composition (basic residues).

It belongs to the bacterial ribosomal protein bL32 family.

This is Large ribosomal subunit protein bL32 from Shewanella baltica (strain OS155 / ATCC BAA-1091).